The chain runs to 61 residues: Small ribosomal subunit protein uS14 (61 aa).

Positions 24, 27, 40, and 43 each coordinate Zn(2+).

This sequence belongs to the universal ribosomal protein uS14 family. Zinc-binding uS14 subfamily. Part of the 30S ribosomal subunit. Contacts proteins S3 and S10. Zn(2+) serves as cofactor.

Functionally, binds 16S rRNA, required for the assembly of 30S particles and may also be responsible for determining the conformation of the 16S rRNA at the A site. This Rhodopirellula baltica (strain DSM 10527 / NCIMB 13988 / SH1) protein is Small ribosomal subunit protein uS14.